A 606-amino-acid polypeptide reads, in one-letter code: Endo-beta-1,4-xylanase Xyn10C (606 aa).

The N-terminal stretch at 1-19 is a signal peptide; it reads MKKIQQLLMLSLISSTLIA. Residue Cys20 is the site of N-palmitoyl cysteine attachment. Residue Cys20 is the site of S-diacylglycerol cysteine attachment. A disordered region spans residues 23–64; it reads GGGGGSTPTTSSSPQSSSPASTPSSASSSSIISSSSLSSSLS. Positions 29-64 are enriched in low complexity; sequence TPTTSSSPQSSSPASTPSSASSSSIISSSSLSSSLS. Residues 91–242 enclose the CBM15 domain; sequence GNVVIEVDMA…KSVTITLAQE (152 aa). A carbohydrate contacts are provided by Asn106 and Gln171. Residues Cys183 and Cys200 are joined by a disulfide bond. An a carbohydrate-binding site is contributed by Gln217. In terms of domain architecture, GH10 spans 245 to 596; the sequence is SANVDHLRDL…KPALRGFADA (352 aa). Residues 296 to 299, His332, and Asn384 each bind substrate; that span reads NIMK. The active-site Proton donor is Glu385. Glu497 acts as the Nucleophile in catalysis. Trp552 contributes to the substrate binding site.

It belongs to the glycosyl hydrolase 10 (cellulase F) family.

It localises to the cell outer membrane. It carries out the reaction Endohydrolysis of (1-&gt;4)-beta-D-xylosidic linkages in xylans.. Its pathway is glycan degradation; xylan degradation. Endo-acting xylanase which specifically cleaves internal linkages on the xylan backbone, releasing xylooligosaccharides. Is able to hydrolyze oat spelt xylan, the arabinoxylans from wheat and rye, and glucuronoxylan. Also displays very low activity against xylooligosaccharides. During the xylan degradation process, Xyn10C may act on the soluble xylans and long xylooligosaccharides products released by the secreted xylanases Xyn11A, Xyn11B and Xyn10A. This chain is Endo-beta-1,4-xylanase Xyn10C (xyn10C), found in Cellvibrio japonicus (Pseudomonas fluorescens subsp. cellulosa).